The primary structure comprises 476 residues: Casein kinase 1-like protein 7 (476 aa).

One can recognise a Protein kinase domain in the interval 9–278 (FKLGKKIGSG…LKRLFRDLFI (270 aa)). ATP is bound by residues 15-23 (IGSGSFGEL) and Lys38. Asp128 serves as the catalytic Proton acceptor. Disordered stretches follow at residues 299-324 (GSSS…DPIE) and 340-464 (PGAV…TRED). The span at 357 to 367 (PRDRSRSRNSD) shows a compositional bias: basic and acidic residues. A compositionally biased stretch (low complexity) spans 382–422 (ANSSSRYRASSSRKAVAASSSRPSSAGGPSESRTSSRLVSS). Residues 423 to 432 (SGGGGSGSGN) are compositionally biased toward gly residues.

This sequence belongs to the protein kinase superfamily. CK1 Ser/Thr protein kinase family. Casein kinase I subfamily. Monomer. Autophosphorylated.

It is found in the cytoplasm. The enzyme catalyses L-seryl-[protein] + ATP = O-phospho-L-seryl-[protein] + ADP + H(+). It catalyses the reaction L-threonyl-[protein] + ATP = O-phospho-L-threonyl-[protein] + ADP + H(+). Functionally, casein kinases are operationally defined by their preferential utilization of acidic proteins such as caseins as substrates. It can phosphorylate a large number of proteins. This Arabidopsis thaliana (Mouse-ear cress) protein is Casein kinase 1-like protein 7.